Consider the following 343-residue polypeptide: Twinfilin (343 aa).

2 ADF-H domains span residues 4 to 139 (QTGI…KHKI) and 177 to 312 (GINC…EELH). The interval 317 to 343 (NLRPQFSKPKGPPSRGAKRLTKPQAVE) is disordered.

Belongs to the actin-binding proteins ADF family. Twinfilin subfamily. In terms of assembly, interacts with G-actin; ADP-actin form.

The protein localises to the cytoplasm. It is found in the cytoskeleton. It localises to the cell cortex. In terms of biological role, actin-binding protein involved in motile and morphological processes. Inhibits actin polymerization, likely by sequestering G-actin. The sequence is that of Twinfilin (twf) from Aedes aegypti (Yellowfever mosquito).